The chain runs to 555 residues: Formate--tetrahydrofolate ligase (555 aa).

65-72 contacts ATP; that stretch reads TPAGEGKS.

The protein belongs to the formate--tetrahydrofolate ligase family.

The catalysed reaction is (6S)-5,6,7,8-tetrahydrofolate + formate + ATP = (6R)-10-formyltetrahydrofolate + ADP + phosphate. It functions in the pathway one-carbon metabolism; tetrahydrofolate interconversion. The sequence is that of Formate--tetrahydrofolate ligase from Staphylococcus aureus (strain Mu3 / ATCC 700698).